The following is an 89-amino-acid chain: Small ribosomal subunit protein bS20 (89 aa).

The interval 68-89 (PNKGARKSSRLDHFVNEQKSKQ) is disordered. A compositionally biased stretch (basic and acidic residues) spans 76-89 (SRLDHFVNEQKSKQ).

The protein belongs to the bacterial ribosomal protein bS20 family.

Functionally, binds directly to 16S ribosomal RNA. The chain is Small ribosomal subunit protein bS20 from Mycoplasmopsis agalactiae (strain NCTC 10123 / CIP 59.7 / PG2) (Mycoplasma agalactiae).